The following is a 369-amino-acid chain: Iron-sulfur cluster assembly SufBD family protein AF_2365 (369 aa).

Belongs to the iron-sulfur cluster assembly SufBD family.

The polypeptide is Iron-sulfur cluster assembly SufBD family protein AF_2365 (Archaeoglobus fulgidus (strain ATCC 49558 / DSM 4304 / JCM 9628 / NBRC 100126 / VC-16)).